We begin with the raw amino-acid sequence, 209 residues long: Protein TIFY 11c (209 aa).

The Tify domain maps to 93-128 (EITEKAQLTIFYGGSVVVFDDFPAEKAGELMKLAGS). The short motif at 153–177 (PIARKVSLQRFLEKRKNRIVVAEPL) is the Jas element. The Nuclear localization signal signature appears at 155–162 (ARKVSLQR). Residues 175–209 (EPLPESEKKEAESSKRAKKDDGGASWLQVNPTLSL) are disordered. Over residues 179 to 196 (ESEKKEAESSKRAKKDDG) the composition is skewed to basic and acidic residues.

Belongs to the TIFY/JAZ family. Post-translationally, ubiquitinated. Targeted for degradation by the SCF(COI1) E3 ubiquitin ligase-proteasome pathway during jasmonate signaling.

It localises to the nucleus. Repressor of jasmonate responses. The sequence is that of Protein TIFY 11c from Oryza sativa subsp. indica (Rice).